The following is a 595-amino-acid chain: GRB2-associated-binding protein 3 (595 aa).

In terms of domain architecture, PH spans 5–117 (DTVCMGWLIK…WVHSISQVCN (113 aa)). The segment at 295–339 (SGVKELNIMSNTPPPRPPKPSYLSEQRQDQPLLTGHSSNKKPGYT) is disordered. Residues 317 to 331 (LSEQRQDQPLLTGHS) show a composition bias toward polar residues. Ser346 is modified (phosphoserine). Disordered stretches follow at residues 389–408 (PSAE…SELR) and 418–463 (PMSS…QEHT). Positions 454–463 (RNLSTIQEHT) are enriched in polar residues. Residue Ser480 is modified to Phosphoserine. A disordered region spans residues 493–513 (STPSEEEEEEEEEEEEEEEEE). Acidic residues predominate over residues 496–513 (SEEEEEEEEEEEEEEEEE).

Belongs to the GAB family. In terms of assembly, interacts with PIK3R/p85, SHP2 and GRAP2/MONA. May interact with Grb2. Phosphorylated on tyrosine residue(s) after macrophage colony-stimulating factor (M-CSF) receptor stimulation. Highly expressed in spleen and thymus and weakly in brain, heart, lung, kidney, uterus, and embryonic stem cells. Also expressed in myeloid and macrophage cell lines.

In Mus musculus (Mouse), this protein is GRB2-associated-binding protein 3 (Gab3).